Consider the following 126-residue polypeptide: Profilin-3 (126 aa).

Belongs to the profilin family. In terms of assembly, occurs in many kinds of cells as a complex with monomeric actin in a 1:1 ratio. In terms of tissue distribution, in embryos, expression is specifically detected in body wall muscle cells. In adults, expression is localized to a striking dot-like fashion in body wall muscle.

The protein localises to the cytoplasm. It is found in the cytoskeleton. Binds to actin and affects the structure of the cytoskeleton. At high concentrations, profilin prevents the polymerization of actin, whereas it enhances it at low concentrations. By binding to PIP2, it inhibits the formation of IP3 and DG. Also binds to poly(L-proline) and phosphatidylinositol 4,5-bisphosphate micelles. This Caenorhabditis elegans protein is Profilin-3 (pfn-3).